A 237-amino-acid chain; its full sequence is RING finger protein vilya (237 aa).

An RING-type zinc finger spans residues 21–69 (CNSCCALFCDKKHTFFLLACHHVFCERCVKVSAGRTPSDAPIFECSTCR). The segment at 172 to 237 (MHRMAQAYRS…IHPPNNSFDL (66 aa)) is disordered. Over residues 180–195 (RSRSLTSQSSSSAQRS) the composition is skewed to low complexity. Positions 221-237 (RQQITSFIHPPNNSFDL) are enriched in polar residues.

In terms of assembly, may interact with itself and with narya and nenya through their RING-type zinc fingers. In terms of tissue distribution, expressed in nurse cell and pro-oocytes (at protein level).

It is found in the chromosome. Required for the formation of DNA double-strand breaks during meiosis together with narya and nenya. In Drosophila melanogaster (Fruit fly), this protein is RING finger protein vilya.